We begin with the raw amino-acid sequence, 348 residues long: UDP-3-O-acylglucosamine N-acyltransferase (348 aa).

Residue His-243 is the Proton acceptor of the active site.

Belongs to the transferase hexapeptide repeat family. LpxD subfamily. Homotrimer.

It carries out the reaction a UDP-3-O-[(3R)-3-hydroxyacyl]-alpha-D-glucosamine + a (3R)-hydroxyacyl-[ACP] = a UDP-2-N,3-O-bis[(3R)-3-hydroxyacyl]-alpha-D-glucosamine + holo-[ACP] + H(+). The protein operates within bacterial outer membrane biogenesis; LPS lipid A biosynthesis. Catalyzes the N-acylation of UDP-3-O-acylglucosamine using 3-hydroxyacyl-ACP as the acyl donor. Is involved in the biosynthesis of lipid A, a phosphorylated glycolipid that anchors the lipopolysaccharide to the outer membrane of the cell. This Hahella chejuensis (strain KCTC 2396) protein is UDP-3-O-acylglucosamine N-acyltransferase.